The chain runs to 152 residues: Nucleoside diphosphate kinase (152 aa).

6 residues coordinate ATP: Lys11, Phe59, Arg87, Thr93, Arg104, and Asn114. Catalysis depends on His117, which acts as the Pros-phosphohistidine intermediate.

Belongs to the NDK family. In terms of assembly, homotetramer. It depends on Mg(2+) as a cofactor.

Its subcellular location is the cytoplasm. It catalyses the reaction dZDP + ATP = dZTP + ADP. It carries out the reaction a 2'-deoxyribonucleoside 5'-diphosphate + ATP = a 2'-deoxyribonucleoside 5'-triphosphate + ADP. The catalysed reaction is a ribonucleoside 5'-diphosphate + ATP = a ribonucleoside 5'-triphosphate + ADP. Its pathway is purine metabolism. Major role in the synthesis of nucleoside triphosphates other than ATP. The ATP gamma phosphate is transferred to the NDP beta phosphate via a ping-pong mechanism, using a phosphorylated active-site intermediate. Its function is as follows. (Microbial infection) Catalyzes the phosphorylation of dZDP to dZTP, when the bacterium is infected by a phage that produces the substrate for the synthesis of dZTP (2- amino-2'-deoxyadenosine 5'-triphosphate), which is then used by the phage as a DNA polymerase substrate. This chain is Nucleoside diphosphate kinase, found in Synechococcus sp. (strain CC9311).